The primary structure comprises 103 residues: Protein IQ-DOMAIN 20 (103 aa).

Positions 10–22 (VVRRKLLRRSQSR) are calmodulin-binding. IQ domains follow at residues 36 to 62 (EEIA…LKSL) and 63 to 87 (VKLQ…CMHA).

This sequence belongs to the IQD family. Interacts with calmodulin (CaM and CML) at the plasma membrane in a calcium ion Ca(2+)- independent manner, however, Ca(2+) seems to modulate calmodulin binding. Binds to multiple calmodulin (CaM) in the presence of Ca(2+) and CaM-like proteins.

It localises to the nucleus. The protein resides in the nucleolus. It is found in the cell membrane. Its function is as follows. May be involved in cooperative interactions with calmodulins or calmodulin-like proteins. Recruits calmodulin proteins to microtubules, thus being a potential scaffold in cellular signaling and trafficking. May associate with nucleic acids and regulate gene expression at the transcriptional or post-transcriptional level. The sequence is that of Protein IQ-DOMAIN 20 from Arabidopsis thaliana (Mouse-ear cress).